The following is a 122-amino-acid chain: MIQPQTLLNVADNSGARELMCIRIIGAGNPRYAHIGDVIVAVIKEAVPNMPLERSEVIRAVIVRTCKELKRNNGIIIRYDDNAAVVIDQEGNPKGTRVFGAIPRELRQFNFTKIVSLAPEVL.

It belongs to the universal ribosomal protein uL14 family. In terms of assembly, part of the 50S ribosomal subunit.

The protein localises to the plastid. It localises to the chloroplast. In terms of biological role, binds to 23S rRNA. The chain is Large ribosomal subunit protein uL14c from Dioscorea elephantipes (Elephant's foot yam).